The chain runs to 217 residues: Large ribosomal subunit protein uL3 (217 aa).

Belongs to the universal ribosomal protein uL3 family. As to quaternary structure, part of the 50S ribosomal subunit. Forms a cluster with proteins L14 and L19.

One of the primary rRNA binding proteins, it binds directly near the 3'-end of the 23S rRNA, where it nucleates assembly of the 50S subunit. This Mycobacterium sp. (strain KMS) protein is Large ribosomal subunit protein uL3.